A 330-amino-acid chain; its full sequence is Ribosomal RNA small subunit methyltransferase C (330 aa).

This sequence belongs to the methyltransferase superfamily. RsmC family. As to quaternary structure, monomer.

The protein localises to the cytoplasm. It carries out the reaction guanosine(1207) in 16S rRNA + S-adenosyl-L-methionine = N(2)-methylguanosine(1207) in 16S rRNA + S-adenosyl-L-homocysteine + H(+). In terms of biological role, specifically methylates the guanine in position 1207 of 16S rRNA in the 30S particle. In Haemophilus influenzae (strain PittEE), this protein is Ribosomal RNA small subunit methyltransferase C.